We begin with the raw amino-acid sequence, 776 residues long: Ent-8-alpha-hydroxylabd-13-en-15-yl diphosphate synthase CPS4, chloroplastic (776 aa).

Residues Met-1–Ala-60 constitute a chloroplast transit peptide. Lys-226 lines the substrate pocket. 2 residues coordinate Mg(2+): Asp-357 and Asp-359. A DXDD motif motif is present at residues Asp-357–Asp-360. Position 443 (Lys-443) interacts with substrate.

Belongs to the terpene synthase family. The cofactor is Mg(2+).

Its subcellular location is the plastid. The protein resides in the chloroplast. It carries out the reaction ent-8alpha-hydroxylabd-13-en-15-yl diphosphate = (2E,6E,10E)-geranylgeranyl diphosphate + H2O. It functions in the pathway secondary metabolite biosynthesis; terpenoid biosynthesis. Involved in diterpenoid biosynthesis. Catalyzes the conversion of all-trans-geranylgeranyl diphosphate to ent-8alpha-hydroxylabd-13-en-15-yl diphosphate. This chain is Ent-8-alpha-hydroxylabd-13-en-15-yl diphosphate synthase CPS4, chloroplastic, found in Salvia miltiorrhiza (Chinese sage).